Here is a 629-residue protein sequence, read N- to C-terminus: Mitochondrial Rho GTPase 1 (629 aa).

The Cytoplasmic portion of the chain corresponds to methionine 1 to arginine 600. The region spanning serine 2–histidine 170 is the Miro 1 domain. GTP-binding positions include glycine 11–serine 18, aspartate 59–arginine 63, and asparagine 115–aspartate 118. EF-hand domains are found at residues alanine 186 to lysine 221 and alanine 306 to leucine 341. Ca(2+) is bound by residues aspartate 199, aspartate 201, aspartate 203, tyrosine 205, glutamate 210, aspartate 319, aspartate 321, aspartate 323, and glutamate 330. The 165-residue stretch at arginine 421–asparagine 585 folds into the Miro 2 domain. GTP contacts are provided by residues glycine 430–serine 437, glutamate 466–glycine 470, and leucine 535–aspartate 538. A helical; Anchor for type IV membrane protein transmembrane segment spans residues alanine 601 to tryptophan 621. Topologically, residues arginine 622–alanine 629 are mitochondrial intermembrane.

Belongs to the mitochondrial Rho GTPase family.

The protein localises to the mitochondrion outer membrane. In terms of biological role, mitochondrial GTPase involved in mitochondrial trafficking. Probably involved in control of anterograde transport of mitochondria and their subcellular distribution. The polypeptide is Mitochondrial Rho GTPase 1 (gem-1) (Neurospora crassa (strain ATCC 24698 / 74-OR23-1A / CBS 708.71 / DSM 1257 / FGSC 987)).